Reading from the N-terminus, the 1002-residue chain is UPF0182 protein alr1037 (1002 aa).

9 helical membrane-spanning segments follow: residues 7–29 (FRLS…LGAE), 49–71 (RGVL…LALA), 123–145 (LRWL…VHYG), 178–200 (QVFS…LIYS), 202–224 (FFLR…YNWA), 258–280 (LLEL…TYLL), 300–319 (HLYG…YWLS), 339–361 (VVVQ…FYLL), and 382–404 (GAYL…YLIV).

Belongs to the UPF0182 family.

The protein localises to the cell membrane. The polypeptide is UPF0182 protein alr1037 (Nostoc sp. (strain PCC 7120 / SAG 25.82 / UTEX 2576)).